A 36-amino-acid polypeptide reads, in one-letter code: Photosystem I reaction center subunit VIII (36 aa).

Residues 6–28 (LPSIFVPLVGLLFPAIAMVSLFF) traverse the membrane as a helical segment.

Belongs to the PsaI family.

The protein resides in the plastid. It is found in the chloroplast thylakoid membrane. In terms of biological role, may help in the organization of the PsaL subunit. The sequence is that of Photosystem I reaction center subunit VIII from Nymphaea alba (White water-lily).